The following is a 188-amino-acid chain: dCTP deaminase (188 aa).

Residues 111-116 (KSTYAR), 135-137 (TLE), glutamine 156, tyrosine 170, and glutamine 180 each bind dCTP. Glutamate 137 acts as the Proton donor/acceptor in catalysis.

The protein belongs to the dCTP deaminase family. As to quaternary structure, homotrimer.

The enzyme catalyses dCTP + H2O + H(+) = dUTP + NH4(+). Its pathway is pyrimidine metabolism; dUMP biosynthesis; dUMP from dCTP (dUTP route): step 1/2. Catalyzes the deamination of dCTP to dUTP. The protein is dCTP deaminase of Acidovorax sp. (strain JS42).